A 179-amino-acid polypeptide reads, in one-letter code: Inosine/xanthosine triphosphatase (179 aa).

Residue 8–13 (TTNPAK) participates in substrate binding. Residues Asp38 and Glu68 each coordinate Mg(2+). Residue 68-69 (EA) participates in substrate binding.

Belongs to the YjjX NTPase family. In terms of assembly, homodimer. Mg(2+) is required as a cofactor. Mn(2+) serves as cofactor.

It catalyses the reaction XTP + H2O = XDP + phosphate + H(+). It carries out the reaction ITP + H2O = IDP + phosphate + H(+). Phosphatase that hydrolyzes non-canonical purine nucleotides such as XTP and ITP to their respective diphosphate derivatives. Probably excludes non-canonical purines from DNA/RNA precursor pool, thus preventing their incorporation into DNA/RNA and avoiding chromosomal lesions. The protein is Inosine/xanthosine triphosphatase of Proteus mirabilis (strain HI4320).